The primary structure comprises 291 residues: 4-hydroxybenzoate octaprenyltransferase (291 aa).

A run of 8 helical transmembrane segments spans residues 23-43 (PIGT…AADG), 47-67 (PALV…GCAI), 98-118 (LAVA…LNAL), 139-159 (FFAI…PMAY), 171-191 (WLML…YAMV), 216-236 (IMLC…ALAL), 238-258 (AAYW…YTLL), and 267-287 (FFVF…AALA).

This sequence belongs to the UbiA prenyltransferase family. Mg(2+) serves as cofactor.

Its subcellular location is the cell inner membrane. The catalysed reaction is all-trans-octaprenyl diphosphate + 4-hydroxybenzoate = 4-hydroxy-3-(all-trans-octaprenyl)benzoate + diphosphate. It participates in cofactor biosynthesis; ubiquinone biosynthesis. Functionally, catalyzes the prenylation of para-hydroxybenzoate (PHB) with an all-trans polyprenyl group. Mediates the second step in the final reaction sequence of ubiquinone-8 (UQ-8) biosynthesis, which is the condensation of the polyisoprenoid side chain with PHB, generating the first membrane-bound Q intermediate 3-octaprenyl-4-hydroxybenzoate. This chain is 4-hydroxybenzoate octaprenyltransferase, found in Ralstonia nicotianae (strain ATCC BAA-1114 / GMI1000) (Ralstonia solanacearum).